We begin with the raw amino-acid sequence, 470 residues long: Putative multidrug resistance protein MdtD (470 aa).

The Periplasmic portion of the chain corresponds to 1-11 (MTELPDNTRWQ). The helical transmembrane segment at 12–32 (LWIVAFGFFMQSLDTTIVNTA) threads the bilayer. At 33 to 48 (LPSMAKSLGESPLHMH) the chain is on the cytoplasmic side. The chain crosses the membrane as a helical span at residues 49–69 (MVVVSYVLTVAVMLPASGWLA). Topologically, residues 70–76 (DKIGVRN) are periplasmic. Residues 77-97 (IFFAAIVLFTLGSLFCALSGT) traverse the membrane as a helical segment. Over 98-101 (LNQL) the chain is Cytoplasmic. The helical transmembrane segment at 102 to 124 (VLARVLQGVGGAMMVPVGRLTVM) threads the bilayer. Residues 125–137 (KIVPRAQYMAAMT) lie on the Periplasmic side of the membrane. Residues 138 to 158 (FVTLPGQIGPLLGPALGGVLV) traverse the membrane as a helical segment. Residues 159 to 164 (EYASWH) lie on the Cytoplasmic side of the membrane. The helical transmembrane segment at 165–185 (WIFLINIPVGIVGAMATFMLM) threads the bilayer. The Periplasmic segment spans residues 186-196 (PNYTIETRRFD). A helical membrane pass occupies residues 197–217 (LPGFLLLAIGMAVLTLALDGS). The Cytoplasmic segment spans residues 218–224 (KSMGISP). A helical membrane pass occupies residues 225–245 (WTLAGLAAGGAAAILLYLFHA). The Periplasmic segment spans residues 246-262 (KKNSGALFSLRLFRTPT). A helical transmembrane segment spans residues 263-283 (FSLGLLGSFAGRIGSGMLPFM). The Cytoplasmic portion of the chain corresponds to 284-285 (TP). Residues 286-306 (VFLQIGLGFSPFHAGLMMIPM) form a helical membrane-spanning segment. Residues 307-341 (VLGSMGMKRIVVQIVNRFGYRRVLVATTLGLALVS) lie on the Periplasmic side of the membrane. A helical membrane pass occupies residues 342 to 362 (LLFMSVALLGWYYLLPLVLLL). Residues 363–395 (QGMVNSARFSSMNTLTLKDLPDTLASSGNSLLS) are Cytoplasmic-facing. A helical transmembrane segment spans residues 396-416 (MIMQLSMSIGVTIAGMLLGMF). Residues 417 to 430 (GQQHIGIDSSATHH) lie on the Periplasmic side of the membrane. The chain crosses the membrane as a helical span at residues 431–451 (VFMYTWLCMAVIIALPAIIFA). Over 452–470 (RVPNDTQQNMVISRRKRSL) the chain is Cytoplasmic.

It belongs to the major facilitator superfamily. TCR/Tet family.

It localises to the cell inner membrane. The polypeptide is Putative multidrug resistance protein MdtD (Salmonella agona (strain SL483)).